The primary structure comprises 770 residues: Elongation factor G, mitochondrial (770 aa).

The N-terminal 24 residues, 1–24 (MLKLSFRSLTSRLPRLSTLVVRGY), are a transit peptide targeting the mitochondrion. The region spanning 57-353 (KQIRNIGISA…AVCDYLPNPS (297 aa)) is the tr-type G domain. GTP is bound by residues 66–73 (AHIDSGKT), 151–155 (DTPGH), and 205–208 (NKMD).

Belongs to the TRAFAC class translation factor GTPase superfamily. Classic translation factor GTPase family. EF-G/EF-2 subfamily.

Its subcellular location is the mitochondrion. It participates in protein biosynthesis; polypeptide chain elongation. Its function is as follows. Mitochondrial GTPase that catalyzes the GTP-dependent ribosomal translocation step during translation elongation. During this step, the ribosome changes from the pre-translocational (PRE) to the post-translocational (POST) state as the newly formed A-site-bound peptidyl-tRNA and P-site-bound deacylated tRNA move to the P and E sites, respectively. Catalyzes the coordinated movement of the two tRNA molecules, the mRNA and conformational changes in the ribosome. This chain is Elongation factor G, mitochondrial (mef1), found in Schizosaccharomyces pombe (strain 972 / ATCC 24843) (Fission yeast).